Reading from the N-terminus, the 487-residue chain is GlcNAc-binding protein A (487 aa).

A signal peptide spans 1–29 (MKKLPNKSLIALALLSVSGASFGHGYVSA). Residues 30 to 201 (YENGVAEGRA…SFYNVIDVKF (172 aa)) form the Chitin-binding type-4 domain. The Chitin-binding type-3 domain occupies 438–479 (AGTKVLASDGAVYQCKEFPFSGYCTQWSPSATQFEPGKGSHW).

The protein belongs to the GbpA family.

It is found in the secreted. In terms of biological role, probably interacts with GlcNAc residues. May promote attachment to both epithelial cell surfaces and chitin. The sequence is that of GlcNAc-binding protein A from Vibrio campbellii (strain ATCC BAA-1116).